We begin with the raw amino-acid sequence, 171 residues long: S-ribosylhomocysteine lyase (171 aa).

Histidine 54, histidine 58, and cysteine 128 together coordinate Fe cation.

The protein belongs to the LuxS family. In terms of assembly, homodimer. The cofactor is Fe cation.

The enzyme catalyses S-(5-deoxy-D-ribos-5-yl)-L-homocysteine = (S)-4,5-dihydroxypentane-2,3-dione + L-homocysteine. In terms of biological role, involved in the synthesis of autoinducer 2 (AI-2) which is secreted by bacteria and is used to communicate both the cell density and the metabolic potential of the environment. The regulation of gene expression in response to changes in cell density is called quorum sensing. Catalyzes the transformation of S-ribosylhomocysteine (RHC) to homocysteine (HC) and 4,5-dihydroxy-2,3-pentadione (DPD). This chain is S-ribosylhomocysteine lyase, found in Pectobacterium atrosepticum (strain SCRI 1043 / ATCC BAA-672) (Erwinia carotovora subsp. atroseptica).